The chain runs to 477 residues: Bifunctional protein HldE (477 aa).

Residues 1–318 (MKVTLPEFER…ENAVRGRADT (318 aa)) are ribokinase. Lysine 179 is subject to N6-acetyllysine. ATP is bound at residue 195-198 (NLSE). The active site involves aspartate 264. Residues 344–477 (MTNGVFDILH…IKKIQQDKKG (134 aa)) are cytidylyltransferase.

In the N-terminal section; belongs to the carbohydrate kinase PfkB family. It in the C-terminal section; belongs to the cytidylyltransferase family. As to quaternary structure, homodimer.

It carries out the reaction D-glycero-beta-D-manno-heptose 7-phosphate + ATP = D-glycero-beta-D-manno-heptose 1,7-bisphosphate + ADP + H(+). The enzyme catalyses D-glycero-beta-D-manno-heptose 1-phosphate + ATP + H(+) = ADP-D-glycero-beta-D-manno-heptose + diphosphate. Its pathway is nucleotide-sugar biosynthesis; ADP-L-glycero-beta-D-manno-heptose biosynthesis; ADP-L-glycero-beta-D-manno-heptose from D-glycero-beta-D-manno-heptose 7-phosphate: step 1/4. It participates in nucleotide-sugar biosynthesis; ADP-L-glycero-beta-D-manno-heptose biosynthesis; ADP-L-glycero-beta-D-manno-heptose from D-glycero-beta-D-manno-heptose 7-phosphate: step 3/4. Functionally, catalyzes the phosphorylation of D-glycero-D-manno-heptose 7-phosphate at the C-1 position to selectively form D-glycero-beta-D-manno-heptose-1,7-bisphosphate. Its function is as follows. Catalyzes the ADP transfer from ATP to D-glycero-beta-D-manno-heptose 1-phosphate, yielding ADP-D-glycero-beta-D-manno-heptose. The chain is Bifunctional protein HldE from Escherichia coli (strain 55989 / EAEC).